Reading from the N-terminus, the 31-residue chain is Protamine-Z (31 aa).

The segment at 1–31 is disordered; that stretch reads ARRRRSRRASRPVRRRRPRRVSRRRRARRRR.

In terms of tissue distribution, testis.

Its subcellular location is the nucleus. The protein localises to the chromosome. Functionally, protamines substitute for histones in the chromatin of sperm during the haploid phase of spermatogenesis. They compact sperm DNA into a highly condensed, stable and inactive complex. The polypeptide is Protamine-Z (Clupea harengus (Atlantic herring)).